The primary structure comprises 173 residues: Plasmolipin (173 aa).

The Cytoplasmic portion of the chain corresponds to methionine 1–serine 34. The MARVEL domain maps to phenylalanine 31 to arginine 160. A helical membrane pass occupies residues isoleucine 35–alanine 55. At serine 56–tryptophan 67 the chain is on the extracellular side. The chain crosses the membrane as a helical span at residues valine 68–leucine 88. Residues serine 89–proline 98 are Cytoplasmic-facing. A helical membrane pass occupies residues tryptophan 99–leucine 119. At alanine 120–alanine 138 the chain is on the extracellular side. The helical transmembrane segment at phenylalanine 139 to tryptophan 159 threads the bilayer. The Cytoplasmic portion of the chain corresponds to arginine 160–valine 173.

Belongs to the MAL family. In terms of assembly, forms oligomers. As to expression, expressed in the posterior midgut.

It localises to the cell membrane. The protein localises to the myelin membrane. Its subcellular location is the apical cell membrane. It is found in the recycling endosome membrane. The protein resides in the vesicle. In terms of biological role, main component of the myelin sheath that plays an important role in myelin membrane biogenesis and myelination. Plays an essential function in apical endocytosis. Plays an important role by activating the Notch signaling pathway, which is essential for cell differentiation and results in correct patterning of the intestinal epithelium, particularly of the posterior gut absorptive cells. This chain is Plasmolipin (pllp), found in Danio rerio (Zebrafish).